The primary structure comprises 1538 residues: Myosin-9 (1538 aa).

In terms of domain architecture, Myosin N-terminal SH3-like spans S16–V65. A Myosin motor domain is found at G70–A740. Residues G164 to T171 and N217 to K225 contribute to the ATP site. 4 actin-binding regions span residues L503–F537, T539–V562, F597–L621, and L621–N643. 6 consecutive IQ domains span residues L743–S772, L766–A795, R791–V820, L814–A843, Q839–L868, and L862–E891. A coiled-coil region spans residues T892–A1064. A compositionally biased stretch (basic and acidic residues) spans S1017–G1032. 2 disordered regions span residues S1017 to R1041 and S1098 to Q1121. A Dilute domain is found at D1168 to E1481.

Belongs to the TRAFAC class myosin-kinesin ATPase superfamily. Myosin family. Plant myosin class XI subfamily. Homodimer.

In terms of biological role, myosin heavy chain that is required for the cell cycle-regulated transport of various organelles and proteins for their segregation. Functions by binding with its tail domain to receptor proteins on organelles and exerting force with its N-terminal motor domain against actin filaments, thereby transporting its cargo along polarized actin cables. Involved in trafficking of Golgi stacks and mitochondria. This Arabidopsis thaliana (Mouse-ear cress) protein is Myosin-9 (XI-C).